The following is a 581-amino-acid chain: Mitosis inhibitor protein kinase mik1 (581 aa).

Disordered regions lie at residues 43–71 and 148–178; these read GHEE…HTPM and NLTN…PLSP. The segment covering 59–71 has biased composition (polar residues); the sequence is KPSNTKRSPHTPM. Over residues 160-169 the composition is skewed to basic residues; it reads PCKKGTKIKL. Residues 289 to 561 form the Protein kinase domain; that stretch reads FQQVKPIHES…LLAMPEMIFI (273 aa). ATP-binding positions include 295–303 and Lys320; that span reads IHESDFSFV. Asp417 (proton acceptor) is an active-site residue. Mg(2+)-binding residues include Asn422 and Asp435.

It belongs to the protein kinase superfamily. Ser/Thr protein kinase family. WEE1 subfamily.

It catalyses the reaction L-seryl-[protein] + ATP = O-phospho-L-seryl-[protein] + ADP + H(+). It carries out the reaction L-threonyl-[protein] + ATP = O-phospho-L-threonyl-[protein] + ADP + H(+). Functionally, protein kinase that acts both on serines and on tyrosines. It acts as a negative regulator of entry into mitosis (G2 to M transition). Phosphorylates and inhibits cdc2. This chain is Mitosis inhibitor protein kinase mik1 (mik1), found in Schizosaccharomyces pombe (strain 972 / ATCC 24843) (Fission yeast).